A 124-amino-acid polypeptide reads, in one-letter code: Small ribosomal subunit protein uS12 (124 aa).

Residues 1-32 (MPTIQQLVRKGRQAKTTKTKTPALKGSPQRRG) form a disordered region. Residues 9 to 18 (RKGRQAKTTK) show a composition bias toward basic residues. Residue Asp-89 is modified to 3-methylthioaspartic acid. The interval 105-124 (QGVRNRKQARSRYGAKKEKS) is disordered. The span at 108–118 (RNRKQARSRYG) shows a compositional bias: basic residues.

Belongs to the universal ribosomal protein uS12 family. As to quaternary structure, part of the 30S ribosomal subunit. Contacts proteins S8 and S17. May interact with IF1 in the 30S initiation complex.

In terms of biological role, with S4 and S5 plays an important role in translational accuracy. Interacts with and stabilizes bases of the 16S rRNA that are involved in tRNA selection in the A site and with the mRNA backbone. Located at the interface of the 30S and 50S subunits, it traverses the body of the 30S subunit contacting proteins on the other side and probably holding the rRNA structure together. The combined cluster of proteins S8, S12 and S17 appears to hold together the shoulder and platform of the 30S subunit. The protein is Small ribosomal subunit protein uS12 of Salinispora arenicola (strain CNS-205).